A 391-amino-acid polypeptide reads, in one-letter code: 3-ketoacyl-CoA thiolase (391 aa).

Catalysis depends on cysteine 95, which acts as the Acyl-thioester intermediate. Residues histidine 347 and cysteine 377 each act as proton acceptor in the active site.

It belongs to the thiolase-like superfamily. Thiolase family. As to quaternary structure, heterotetramer of two alpha chains (FadB) and two beta chains (FadA).

It is found in the cytoplasm. The catalysed reaction is an acyl-CoA + acetyl-CoA = a 3-oxoacyl-CoA + CoA. It participates in lipid metabolism; fatty acid beta-oxidation. Its function is as follows. Catalyzes the final step of fatty acid oxidation in which acetyl-CoA is released and the CoA ester of a fatty acid two carbons shorter is formed. This Marinobacter nauticus (strain ATCC 700491 / DSM 11845 / VT8) (Marinobacter aquaeolei) protein is 3-ketoacyl-CoA thiolase.